A 490-amino-acid polypeptide reads, in one-letter code: Homoserine O-acetyltransferase (490 aa).

The AB hydrolase-1 domain occupies 47 to 353 (NAILVCHALT…SQFGHDAFLI (307 aa)). S152 functions as the Nucleophile in the catalytic mechanism. Residue R221 coordinates substrate. Active-site residues include D315 and H348. Residue D349 participates in substrate binding. 2 consecutive CBS domains span residues 375 to 432 (MNTQ…YTSL) and 436 to 490 (MSSQ…GRGP).

Belongs to the AB hydrolase superfamily. MetX family. Homodimer.

It localises to the cytoplasm. It catalyses the reaction L-homoserine + acetyl-CoA = O-acetyl-L-homoserine + CoA. It functions in the pathway amino-acid biosynthesis; L-methionine biosynthesis via de novo pathway; O-acetyl-L-homoserine from L-homoserine: step 1/1. Its function is as follows. Transfers an acetyl group from acetyl-CoA to L-homoserine, forming acetyl-L-homoserine. This is Homoserine O-acetyltransferase from Methanosphaerula palustris (strain ATCC BAA-1556 / DSM 19958 / E1-9c).